We begin with the raw amino-acid sequence, 439 residues long: Histidine--tRNA ligase (439 aa).

The protein belongs to the class-II aminoacyl-tRNA synthetase family. Homodimer.

It is found in the cytoplasm. The catalysed reaction is tRNA(His) + L-histidine + ATP = L-histidyl-tRNA(His) + AMP + diphosphate + H(+). The polypeptide is Histidine--tRNA ligase (Clostridium tetani (strain Massachusetts / E88)).